The sequence spans 425 residues: Enolase (425 aa).

A (2R)-2-phosphoglycerate-binding site is contributed by Gln163. The active-site Proton donor is the Glu205. 3 residues coordinate Mg(2+): Asp242, Glu285, and Asp312. Residues Lys337, Arg366, Ser367, and Lys388 each coordinate (2R)-2-phosphoglycerate. The active-site Proton acceptor is Lys337.

Belongs to the enolase family. It depends on Mg(2+) as a cofactor.

The protein localises to the cytoplasm. It is found in the secreted. It localises to the cell surface. It catalyses the reaction (2R)-2-phosphoglycerate = phosphoenolpyruvate + H2O. Its pathway is carbohydrate degradation; glycolysis; pyruvate from D-glyceraldehyde 3-phosphate: step 4/5. Catalyzes the reversible conversion of 2-phosphoglycerate (2-PG) into phosphoenolpyruvate (PEP). It is essential for the degradation of carbohydrates via glycolysis. The protein is Enolase of Syntrophomonas wolfei subsp. wolfei (strain DSM 2245B / Goettingen).